The sequence spans 216 residues: Trimethylamine corrinoid protein 1 (216 aa).

The B12-binding N-terminal domain occupies Met-1–Lys-92. The region spanning Leu-94–Leu-216 is the B12-binding domain. His-107 provides a ligand contact to methylcob(III)alamin.

Belongs to the methylamine corrinoid protein family. In terms of assembly, can form a complex with MttB.

It functions in the pathway one-carbon metabolism; methanogenesis from trimethylamine. Acts probably as a methyl group carrier between MttB and either MtbA or MtaA. The chain is Trimethylamine corrinoid protein 1 (mttC1) from Methanosarcina mazei (strain ATCC BAA-159 / DSM 3647 / Goe1 / Go1 / JCM 11833 / OCM 88) (Methanosarcina frisia).